A 107-amino-acid chain; its full sequence is Nucleoid-associated protein GOX0603 (107 aa).

The protein belongs to the YbaB/EbfC family. As to quaternary structure, homodimer.

The protein resides in the cytoplasm. It localises to the nucleoid. Binds to DNA and alters its conformation. May be involved in regulation of gene expression, nucleoid organization and DNA protection. The protein is Nucleoid-associated protein GOX0603 of Gluconobacter oxydans (strain 621H) (Gluconobacter suboxydans).